Here is a 1027-residue protein sequence, read N- to C-terminus: Kinesin heavy chain isoform 5A (1027 aa).

A2 bears the N-acetylalanine mark. The Kinesin motor domain maps to 9 to 327 (SIKVLCRFRP…LMFGQRAKTI (319 aa)). 86-93 (GQTSSGKT) contacts ATP. A microtubule-binding region spans residues 174–315 (VSSPEEILDV…PSSYNDAETK (142 aa)). The segment at 271 to 361 (EGTKSYVPYR…KTKAQKETIA (91 aa)) is necessary for interaction with ZFYVE27. A coiled-coil region spans residues 331–905 (ASVNLELTAE…EVDRIKEAVR (575 aa)). The interaction with BICD2 stretch occupies residues 353–1027 (TKAQKETIAK…FPLHQETAAS (675 aa)). T397 carries the phosphothreonine modification. The interval 906 to 936 (YKSSGKRGHSAQIAKPVRPGHYPASSPTNPY) is disordered. The interval 907 to 1027 (KSSGKRGHSA…FPLHQETAAS (121 aa)) is globular.

It belongs to the TRAFAC class myosin-kinesin ATPase superfamily. Kinesin family. Kinesin subfamily. Oligomer composed of two heavy chains and two light chains. Interacts with GRIP1. Interacts with FMR1 (via C-terminus); this interaction is increased in a mGluR-dependent manner. Interacts with BORCS5. Interacts with ZFYVE27. Interacts with VAPA, VAPB, SURF4, RAB11A (GDP-bound form), RAB11B (GDP-bound form) and RTN3 in a ZFYVE27-dependent manner. Interacts with BICD2. Interacts with DTNB. In terms of tissue distribution, expressed in brain.

The protein resides in the cytoplasm. It is found in the perinuclear region. It localises to the cytoskeleton. The protein localises to the perikaryon. The catalysed reaction is ATP + H2O + a kinesin associated with a microtubule at position (n) = ADP + phosphate a kinesin associated with a microtubule at position (n+1, toward the plus end).. In terms of biological role, microtubule-dependent motor required for slow axonal transport of neurofilament proteins (NFH, NFM and NFL). Can induce formation of neurite-like membrane protrusions in non-neuronal cells in a ZFYVE27-dependent manner. The ZFYVE27-KIF5A complex contributes to the vesicular transport of VAPA, VAPB, SURF4, RAB11A, RAB11B and RTN3 proteins in neurons. Required for anterograde axonal transportation of MAPK8IP3/JIP3 which is essential for MAPK8IP3/JIP3 function in axon elongation. This Rattus norvegicus (Rat) protein is Kinesin heavy chain isoform 5A.